The sequence spans 99 residues: MSTTIRQVMVRGRVQGVGYRAWLAMTAEAQGLEGWVRNRRDGSVEALLAGRETVVAEMISRCRTGPSAAHVDEVIVEEAGQDALNLRYAGERFSILSTL.

The region spanning 5-97 (IRQVMVRGRV…YAGERFSILS (93 aa)) is the Acylphosphatase-like domain. Catalysis depends on residues arginine 20 and asparagine 38.

The protein belongs to the acylphosphatase family.

The catalysed reaction is an acyl phosphate + H2O = a carboxylate + phosphate + H(+). The sequence is that of Acylphosphatase (acyP) from Rhodopseudomonas palustris (strain BisB5).